We begin with the raw amino-acid sequence, 109 residues long: Ig kappa chain V region 3374 (109 aa).

The segment at 1 to 24 is framework-1; the sequence is ADIVMTQTPASVSAAVGGTVTINC. Residues 25 to 35 form a complementarity-determining-1 region; the sequence is QASQNIDSWLA. The interval 36 to 50 is framework-2; that stretch reads WYQQKPGQPPKVLIY. The tract at residues 51 to 57 is complementarity-determining-2; it reads RTSTLAS. The framework-3 stretch occupies residues 58 to 89; it reads GVPSRFKGSRSGTEFTLTISDLECADAATYYC. Residues 90–98 are complementarity-determining-3; sequence QSYYSISSA. The tract at residues 99–108 is framework-4; sequence FGGGTEVVVK.

This chain is Ig kappa chain V region 3374, found in Oryctolagus cuniculus (Rabbit).